A 424-amino-acid chain; its full sequence is Enolase (424 aa).

Gln-165 serves as a coordination point for (2R)-2-phosphoglycerate. Glu-207 serves as the catalytic Proton donor. Mg(2+) contacts are provided by Asp-244, Glu-283, and Asp-310. 4 residues coordinate (2R)-2-phosphoglycerate: Lys-335, Arg-364, Ser-365, and Lys-386. Lys-335 acts as the Proton acceptor in catalysis.

This sequence belongs to the enolase family. Mg(2+) serves as cofactor.

Its subcellular location is the cytoplasm. It localises to the secreted. The protein localises to the cell surface. It catalyses the reaction (2R)-2-phosphoglycerate = phosphoenolpyruvate + H2O. Its pathway is carbohydrate degradation; glycolysis; pyruvate from D-glyceraldehyde 3-phosphate: step 4/5. Its function is as follows. Catalyzes the reversible conversion of 2-phosphoglycerate (2-PG) into phosphoenolpyruvate (PEP). It is essential for the degradation of carbohydrates via glycolysis. The polypeptide is Enolase (Chlamydia felis (strain Fe/C-56) (Chlamydophila felis)).